Here is a 254-residue protein sequence, read N- to C-terminus: Imidazole glycerol phosphate synthase subunit HisF (254 aa).

Catalysis depends on residues D11 and D130.

This sequence belongs to the HisA/HisF family. As to quaternary structure, heterodimer of HisH and HisF.

It is found in the cytoplasm. It catalyses the reaction 5-[(5-phospho-1-deoxy-D-ribulos-1-ylimino)methylamino]-1-(5-phospho-beta-D-ribosyl)imidazole-4-carboxamide + L-glutamine = D-erythro-1-(imidazol-4-yl)glycerol 3-phosphate + 5-amino-1-(5-phospho-beta-D-ribosyl)imidazole-4-carboxamide + L-glutamate + H(+). Its pathway is amino-acid biosynthesis; L-histidine biosynthesis; L-histidine from 5-phospho-alpha-D-ribose 1-diphosphate: step 5/9. IGPS catalyzes the conversion of PRFAR and glutamine to IGP, AICAR and glutamate. The HisF subunit catalyzes the cyclization activity that produces IGP and AICAR from PRFAR using the ammonia provided by the HisH subunit. In Microcystis aeruginosa (strain NIES-843 / IAM M-2473), this protein is Imidazole glycerol phosphate synthase subunit HisF.